We begin with the raw amino-acid sequence, 202 residues long: Imidazoleglycerol-phosphate dehydratase (202 aa).

This sequence belongs to the imidazoleglycerol-phosphate dehydratase family.

It is found in the cytoplasm. The catalysed reaction is D-erythro-1-(imidazol-4-yl)glycerol 3-phosphate = 3-(imidazol-4-yl)-2-oxopropyl phosphate + H2O. The protein operates within amino-acid biosynthesis; L-histidine biosynthesis; L-histidine from 5-phospho-alpha-D-ribose 1-diphosphate: step 6/9. The protein is Imidazoleglycerol-phosphate dehydratase of Rhizobium etli (strain ATCC 51251 / DSM 11541 / JCM 21823 / NBRC 15573 / CFN 42).